The sequence spans 405 residues: Probable tRNA sulfurtransferase (405 aa).

The region spanning 60–165 (AEVDKRLKKV…QDAVYISNQL (106 aa)) is the THUMP domain. ATP-binding positions include 183 to 184 (ML), 208 to 209 (HF), R265, G287, and Q296.

It belongs to the ThiI family.

The protein resides in the cytoplasm. It catalyses the reaction [ThiI sulfur-carrier protein]-S-sulfanyl-L-cysteine + a uridine in tRNA + 2 reduced [2Fe-2S]-[ferredoxin] + ATP + H(+) = [ThiI sulfur-carrier protein]-L-cysteine + a 4-thiouridine in tRNA + 2 oxidized [2Fe-2S]-[ferredoxin] + AMP + diphosphate. The enzyme catalyses [ThiS sulfur-carrier protein]-C-terminal Gly-Gly-AMP + S-sulfanyl-L-cysteinyl-[cysteine desulfurase] + AH2 = [ThiS sulfur-carrier protein]-C-terminal-Gly-aminoethanethioate + L-cysteinyl-[cysteine desulfurase] + A + AMP + 2 H(+). Its pathway is cofactor biosynthesis; thiamine diphosphate biosynthesis. Functionally, catalyzes the ATP-dependent transfer of a sulfur to tRNA to produce 4-thiouridine in position 8 of tRNAs, which functions as a near-UV photosensor. Also catalyzes the transfer of sulfur to the sulfur carrier protein ThiS, forming ThiS-thiocarboxylate. This is a step in the synthesis of thiazole, in the thiamine biosynthesis pathway. The sulfur is donated as persulfide by IscS. This chain is Probable tRNA sulfurtransferase, found in Lactobacillus helveticus (strain DPC 4571).